The sequence spans 64 residues: Probable cytochrome c oxidase subunit 5C-1 (64 aa).

The helical transmembrane segment at S15–W34 threads the bilayer.

The protein belongs to the cytochrome c oxidase subunit 5C family.

It is found in the mitochondrion inner membrane. Its function is as follows. This protein is one of the nuclear-coded polypeptide chains of cytochrome c oxidase, the terminal oxidase in mitochondrial electron transport. The chain is Probable cytochrome c oxidase subunit 5C-1 from Arabidopsis thaliana (Mouse-ear cress).